Reading from the N-terminus, the 357-residue chain is Uroporphyrinogen decarboxylase (357 aa).

Residues 27–31, Asp-77, Tyr-154, Ser-209, and His-330 contribute to the substrate site; that span reads RQAGR.

The protein belongs to the uroporphyrinogen decarboxylase family. As to quaternary structure, homodimer.

It is found in the cytoplasm. It carries out the reaction uroporphyrinogen III + 4 H(+) = coproporphyrinogen III + 4 CO2. Its pathway is porphyrin-containing compound metabolism; protoporphyrin-IX biosynthesis; coproporphyrinogen-III from 5-aminolevulinate: step 4/4. In terms of biological role, catalyzes the decarboxylation of four acetate groups of uroporphyrinogen-III to yield coproporphyrinogen-III. The polypeptide is Uroporphyrinogen decarboxylase (Acinetobacter baumannii (strain SDF)).